A 377-amino-acid chain; its full sequence is Glutamate 5-kinase (377 aa).

Lys-20 is a binding site for ATP. Substrate is bound by residues Ser-59, Asp-146, and Asn-158. ATP contacts are provided by residues 178 to 179 (SD) and 220 to 226 (TGGMSTK). In terms of domain architecture, PUA spans 285-363 (RGTLTVDAGA…ADIEAVLGYR (79 aa)).

Belongs to the glutamate 5-kinase family.

Its subcellular location is the cytoplasm. It carries out the reaction L-glutamate + ATP = L-glutamyl 5-phosphate + ADP. It participates in amino-acid biosynthesis; L-proline biosynthesis; L-glutamate 5-semialdehyde from L-glutamate: step 1/2. In terms of biological role, catalyzes the transfer of a phosphate group to glutamate to form L-glutamate 5-phosphate. The polypeptide is Glutamate 5-kinase (Myxococcus xanthus (strain DK1622)).